The chain runs to 181 residues: Large ribosomal subunit protein uL6 (181 aa).

The protein belongs to the universal ribosomal protein uL6 family. Part of the 50S ribosomal subunit.

This protein binds to the 23S rRNA, and is important in its secondary structure. It is located near the subunit interface in the base of the L7/L12 stalk, and near the tRNA binding site of the peptidyltransferase center. This Hydrogenobaculum sp. (strain Y04AAS1) protein is Large ribosomal subunit protein uL6.